Here is a 249-residue protein sequence, read N- to C-terminus: Probable transcriptional regulatory protein IL1088 (249 aa).

This sequence belongs to the TACO1 family.

The protein resides in the cytoplasm. In Idiomarina loihiensis (strain ATCC BAA-735 / DSM 15497 / L2-TR), this protein is Probable transcriptional regulatory protein IL1088.